A 1368-amino-acid polypeptide reads, in one-letter code: DNA-directed RNA polymerase subunit beta (1368 aa).

The protein belongs to the RNA polymerase beta chain family. As to quaternary structure, the RNAP catalytic core consists of 2 alpha, 1 beta, 1 beta' and 1 omega subunit. When a sigma factor is associated with the core the holoenzyme is formed, which can initiate transcription.

The catalysed reaction is RNA(n) + a ribonucleoside 5'-triphosphate = RNA(n+1) + diphosphate. In terms of biological role, DNA-dependent RNA polymerase catalyzes the transcription of DNA into RNA using the four ribonucleoside triphosphates as substrates. The sequence is that of DNA-directed RNA polymerase subunit beta from Cupriavidus taiwanensis (strain DSM 17343 / BCRC 17206 / CCUG 44338 / CIP 107171 / LMG 19424 / R1) (Ralstonia taiwanensis (strain LMG 19424)).